Reading from the N-terminus, the 468-residue chain is Efflux pump azaK (468 aa).

A disordered region spans residues 1–30 (MTVHPPAVADETSPLLPSQDGPGHNGIVPA). The next 6 helical transmembrane spans lie at 43-65 (QVAL…FPFV), 80-100 (VGFY…MLMI), 112-132 (KPVL…FGFS), 135-155 (LGQM…VVTV), 174-194 (YFSL…GALC), and 207-227 (LPTV…LMFV). An N-linked (GlcNAc...) asparagine glycan is attached at Asn-228. A run of 6 helical transmembrane segments spans residues 257-277 (VLPV…YTAV), 296-316 (FYIS…LVLV), 329-349 (ILRG…GASV), 357-377 (VAFW…AMQL), 387-407 (VSPS…IISF), and 429-449 (PGFY…AFTL).

It belongs to the major facilitator superfamily.

It is found in the cell membrane. In terms of biological role, efflux pump that might be required for efficient secretion of azaphilones. This is Efflux pump azaK from Aspergillus niger (strain ATCC 1015 / CBS 113.46 / FGSC A1144 / LSHB Ac4 / NCTC 3858a / NRRL 328 / USDA 3528.7).